The chain runs to 391 residues: MKFVDEAVVKVQAGDGGSGVVSFWREKFITKGGPDGGDGGDGGDVYIQADENLNTLIDYRFQRFYEAERGENGRGGNCTGKRGKDITLRVPVGTRAVDIHTNEIVAEVAEHGKKVMVAKGGWHGLGNTRFKSSVNRAPRQRTLGTKGEIREIRLELLLLADVGMLGLPNAGKSTFIRAVSAAKPKVADYPFTTLIPSLGVVSVVPEKSFVVADIPGLIEGAADGAGLGIRFLKHLERCRVLLHMIDIMPIDQSDPIQNALTIIDELEQYSEKLAGKPRWLVFNKTDLMPEEEANEKIQEILDALGWEDEYFKISAINRNGTKELCYKLADFMENLPREEEEVAEEDKVNFMWDDYHKDAIAGKDVITEEDDDDWDDCDDEDDDGHVVYVRD.

An Obg domain is found at 1–159 (MKFVDEAVVK…REIRLELLLL (159 aa)). In terms of domain architecture, OBG-type G spans 160–333 (ADVGMLGLPN…LCYKLADFME (174 aa)). GTP-binding positions include 166-173 (GLPNAGKS), 191-195 (FTTLI), 213-216 (DIPG), 283-286 (NKTD), and 314-316 (SAI). Mg(2+)-binding residues include S173 and T193. The segment covering 367 to 383 (TEEDDDDWDDCDDEDDD) has biased composition (acidic residues). Positions 367–391 (TEEDDDDWDDCDDEDDDGHVVYVRD) are disordered.

This sequence belongs to the TRAFAC class OBG-HflX-like GTPase superfamily. OBG GTPase family. In terms of assembly, monomer. The cofactor is Mg(2+).

Its subcellular location is the cytoplasm. Functionally, an essential GTPase which binds GTP, GDP and possibly (p)ppGpp with moderate affinity, with high nucleotide exchange rates and a fairly low GTP hydrolysis rate. Plays a role in control of the cell cycle, stress response, ribosome biogenesis and in those bacteria that undergo differentiation, in morphogenesis control. In Vibrio campbellii (strain ATCC BAA-1116), this protein is GTPase Obg.